The chain runs to 214 residues: MAELLNVKPTRMELLNLKRRITLAKKGHKLLKDKQDALVMEFFTIYDEALRLREELNEKMMEAFKALQRAEIDVGTLRMKEISLSVKPNREVEVKTRNVMGVPVPLIEAESFKRSAGERGYAFVSSSARVDLAAEKFEEVLDLAVRLAEVEETLKRLAKEIEVTKRRVNALEYIIIPRMEATVKFIKQRLDEMERENFFRLKRVKALIEARSGS.

This sequence belongs to the V-ATPase D subunit family. As to quaternary structure, has multiple subunits with at least A(3), B(3), C, D, E, F, H, I and proteolipid K(x).

The protein localises to the cell membrane. Functionally, component of the A-type ATP synthase that produces ATP from ADP in the presence of a proton gradient across the membrane. The sequence is that of A-type ATP synthase subunit D from Thermococcus kodakarensis (strain ATCC BAA-918 / JCM 12380 / KOD1) (Pyrococcus kodakaraensis (strain KOD1)).